The following is a 240-amino-acid chain: DNA repair protein RecO (240 aa).

It belongs to the RecO family.

In terms of biological role, involved in DNA repair and RecF pathway recombination. In Actinobacillus pleuropneumoniae serotype 5b (strain L20), this protein is DNA repair protein RecO.